A 353-amino-acid chain; its full sequence is 2-Hydroxyacid oxidase 2 (353 aa).

In terms of domain architecture, FMN hydroxy acid dehydrogenase spans 2–353 (PLVCLTDFRE…NQDLIQFSRL (352 aa)). FMN contacts are provided by residues 77–79 (PTG), S106, and Q128. Residue Y130 participates in a 2-oxocarboxylate binding. FMN is bound at residue T156. Residue R165 coordinates a 2-oxocarboxylate. FMN is bound at residue K224. H248 functions as the Proton acceptor in the catalytic mechanism. R251 lines the a 2-oxocarboxylate pocket. Residues 279 to 283 (DGGIR) and 302 to 303 (GR) contribute to the FMN site. Residues 351–353 (SRL) carry the Microbody targeting signal motif.

This sequence belongs to the FMN-dependent alpha-hydroxy acid dehydrogenase family. In terms of assembly, homotetramer. FMN serves as cofactor.

The protein resides in the peroxisome. The catalysed reaction is a (2S)-2-hydroxycarboxylate + O2 = a 2-oxocarboxylate + H2O2. The enzyme catalyses 2-hydroxyhexadecanoate + O2 = 2-oxohexadecanoate + H2O2. It carries out the reaction 2-hydroxyoctanoate + O2 = 2-oxooctanoate + H2O2. It functions in the pathway lipid metabolism; fatty acid metabolism. Its function is as follows. Oxidase that catalyzes the oxidation of medium and long chain hydroxyacids such as 2-hydroxyhexadecanoate and 2-hydroxyoctanoate, to the correspondong 2-oxoacids. Its role in the oxidation of 2-hydroxy fatty acids may contribute to the general pathway of fatty acid alpha-oxidation. Active in vitro with the artificial electron acceptor 2,6-dichlorophenolindophenol (DCIP), but O2 is believed to be the physiological electron acceptor, leading to the production of H2O2. The protein is 2-Hydroxyacid oxidase 2 (HAO2) of Bos taurus (Bovine).